Reading from the N-terminus, the 745-residue chain is Myeloperoxidase (745 aa).

The signal sequence occupies residues 1-48 (MGVPFFSSLRCMVDLGPCWAGGLTAEMKLLLALAGLLAILATPQPSEG). Asn139 is a glycosylation site (N-linked (GlcNAc...) asparagine). Cys167 and Cys180 are joined by a disulfide. A heme b-binding site is contributed by Asp260. His261 (proton acceptor) is an active-site residue. Asp262 serves as a coordination point for Ca(2+). 2 disulfide bridges follow: Cys281–Cys291 and Cys285–Cys309. Residue Cys316 is modified to Cysteine sulfenic acid (-SOH). An N-linked (GlcNAc...) asparagine glycan is attached at Asn323. Residues Thr334, Phe336, Asp338, and Ser340 each coordinate Ca(2+). N-linked (GlcNAc...) asparagine glycans are attached at residues Asn355 and Asn391. Cys387 and Cys398 are oxidised to a cystine. Heme b contacts are provided by Glu408 and Met409. Asn483 is a glycosylation site (N-linked (GlcNAc...) asparagine). His502 lines the heme b pocket. Cystine bridges form between Cys606-Cys663 and Cys704-Cys730. N-linked (GlcNAc...) asparagine glycosylation occurs at Asn729.

It belongs to the peroxidase family. XPO subfamily. In terms of assembly, homodimer; disulfide-linked. Each monomer consists of a light and a heavy chain. Found in a complex with CP and LTF; interacts directly with CP, which protects CP antioxidant properties by MPO. Requires Ca(2+) as cofactor. Heme b is required as a cofactor.

The protein resides in the lysosome. It carries out the reaction chloride + H2O2 + H(+) = hypochlorous acid + H2O. Functionally, part of the host defense system of polymorphonuclear leukocytes. It is responsible for microbicidal activity against a wide range of organisms. In the stimulated PMN, MPO catalyzes the production of hypohalous acids, primarily hypochlorous acid in physiologic situations, and other toxic intermediates that greatly enhance PMN microbicidal activity. Mediates the proteolytic cleavage of alpha-1-microglobulin to form t-alpha-1-microglobulin, which potently inhibits oxidation of low-density lipoprotein particles and limits vascular damage. The sequence is that of Myeloperoxidase from Homo sapiens (Human).